The following is a 138-amino-acid chain: Protein Rrf1 (138 aa).

The 113-residue stretch at 4–116 folds into the Response regulatory domain; the sequence is RILVVQEDPD…LLLALVDRAL (113 aa). Residues aspartate 13 and aspartate 53 each carry the 4-aspartylphosphate modification.

Functionally, may be involved in regulation of gene transcription. Belongs to the family of response regulators, and members of this family involved in the regulation of gene transcription are two-domain proteins. This protein contains only the N-terminal phosphorylation domain and not the C-terminal DNA-binding domain but it may bind to Rrf2 protein and the latter may bind to DNA. The protein is Protein Rrf1 (rrf1) of Nitratidesulfovibrio vulgaris (strain ATCC 29579 / DSM 644 / CCUG 34227 / NCIMB 8303 / VKM B-1760 / Hildenborough) (Desulfovibrio vulgaris).